Here is a 468-residue protein sequence, read N- to C-terminus: Pancreatic lipase-related protein 2 (468 aa).

An N-terminal signal peptide occupies residues 1-16; it reads MLLCWIVSLLLATVGG. Cys20 and Cys26 are oxidised to a cystine. Residues 92 to 104 form a required for galactolipase activity region; the sequence is VHGFIDKGEDGWL. Cys108 and Cys119 are oxidised to a cystine. The Nucleophile role is filled by Ser170. Asp194 functions as the Charge relay system in the catalytic mechanism. Ca(2+) contacts are provided by Glu205, Arg208, Asp210, and Asp213. The cysteines at positions 255 and 279 are disulfide-linked. Positions 256-278 are required for galactolipase activity; sequence QKNILSTIVDINGIWEGTQNFVA. His281 acts as the Charge relay system in catalysis. 2 disulfide bridges follow: Cys303–Cys314 and Cys317–Cys322. 2 N-linked (GlcNAc...) asparagine glycosylation sites follow: Asn352 and Asn427. In terms of domain architecture, PLAT spans 356-468; it reads WRYKVSVTLS…EDVLQSLYPC (113 aa). Cys452 and Cys468 are disulfide-bonded.

Belongs to the AB hydrolase superfamily. Lipase family. As to expression, expressed in pancreatic acinar cells (at protein level).

It is found in the secreted. It localises to the zymogen granule membrane. The protein localises to the cell projection. Its subcellular location is the neuron projection. The enzyme catalyses a triacylglycerol + H2O = a diacylglycerol + a fatty acid + H(+). The catalysed reaction is a 1,2-diacyl-3-O-(beta-D-galactosyl)-sn-glycerol + 2 H2O = 3-beta-D-galactosyl-sn-glycerol + 2 a fatty acid + 2 H(+). It catalyses the reaction 1,2,3-tri-(9Z-octadecenoyl)-glycerol + H2O = di-(9Z)-octadecenoylglycerol + (9Z)-octadecenoate + H(+). It carries out the reaction di-(9Z)-octadecenoylglycerol + H2O = (9Z-octadecenoyl)-glycerol + (9Z)-octadecenoate + H(+). The enzyme catalyses (9Z-octadecenoyl)-glycerol + H2O = glycerol + (9Z)-octadecenoate + H(+). The catalysed reaction is 1-(9Z-octadecenoyl)-glycerol + H2O = glycerol + (9Z)-octadecenoate + H(+). It catalyses the reaction 1,2,3-tripropanoylglycerol + H2O = dipropanoylglycerol + propanoate + H(+). It carries out the reaction 1,2,3-tributanoylglycerol + H2O = dibutanoylglycerol + butanoate + H(+). The enzyme catalyses 1,2,3-trioctanoylglycerol + H2O = dioctanoylglycerol + octanoate + H(+). The catalysed reaction is 1,2-didecanoylglycerol + H2O = decanoylglycerol + decanoate + H(+). It catalyses the reaction long chain 1,2-diacyl-3-O-beta-D-galactosyl-sn-glycerol + H2O = long chain acyl-3-O-beta-D-galactosyl-sn-glycerol + a fatty acid + H(+). It carries out the reaction 1,2-dioctanoyl-3-O-beta-D-galactosyl-sn-glycerol + H2O = octanoyl-3-(beta-D-galactosyl)-sn-glycerol + octanoate + H(+). The enzyme catalyses 1,2-didodecanoyl-3-beta-D-galactosyl-sn-glycerol + H2O = dodecanoyl-3-beta-D-galactosyl-sn-glycerol + dodecanoate + H(+). The catalysed reaction is 1-beta-D-galactosyl-2,3-didodecanoyl-sn-glycerol + H2O = 1-beta-D-galactosyl-dodecanoyl-sn-glycerol + dodecanoate + H(+). It catalyses the reaction a 1,2-diacyl-3-O-[alpha-D-galactosyl-(1-&gt;6)-beta-D-galactosyl]-sn-glycerol + H2O = acyl-3-O-[alpha-D-galactosyl-(1-&gt;6)-beta-D-galactosyl]-sn-glycerol + a fatty acid + H(+). It carries out the reaction long chain 1,2-diacyl-3-O-[alpha-D-galactosyl-(1-&gt;6)-beta-D-galactosyl]-sn-glycerol + H2O = long chain acyl-3-O-[alpha-D-galactosyl-(1-&gt;6)-beta-D-galactosyl]-sn-glycerol + a fatty acid + H(+). The enzyme catalyses 1,2-dioctanoyl-3-O-[alpha-D-galactosyl-(1-&gt;6)-beta-D-galactosyl]-sn-glycerol + H2O = octanoyl-3-O-[alpha-D-galactosyl-(1-&gt;6)-beta-D-galactosyl]-sn-glycerol + octanoate + H(+). The catalysed reaction is 1,2-didodecanoyl-3-O-[alpha-D-galactosyl-(1-&gt;6)-beta-D-galactosyl]-sn-glycerol + H2O = dodecanoyl-3-O-[alpha-D-galactosyl-(1-&gt;6)-beta-D-galactosyl]-sn-glycerol + dodecanoate + H(+). It catalyses the reaction a 1,2-diacyl-sn-glycero-3-phosphocholine + H2O = a monoacyl-sn-glycero-3-phosphocholine + a fatty acid + H(+). It participates in glycerolipid metabolism; triacylglycerol degradation. The protein operates within glycolipid metabolism. With respect to regulation, CLPS stimulates triacylglycerol lipase activity. Triacylglycerol lipase activity is not inhibited by increasing bile salt concentration. In terms of biological role, lipase that primarily hydrolyzes triglycerides and galactosylglycerides. In neonates, may play a major role in pancreatic digestion of dietary fats such as milk fat globules enriched in long-chain triglycerides. Hydrolyzes short-, medium- and long-chain fatty acyls in triglycerides without apparent positional specificity. Can completely deacylate triacylglycerols. When the liver matures and bile salt synthesis increases, likely functions mainly as a galactolipase and monoacylglycerol lipase. Hydrolyzes monogalactosyldiglycerols (MGDG) and digalactosyldiacylglycerols (DGDG) present in a plant-based diet, releasing long-chain polyunsaturated fatty acids. Hydrolyzes medium- and long-chain fatty acyls in galactolipids. May act together with LIPF to hydrolyze partially digested triglycerides. Hydrolyzes long-chain monoglycerides with high efficiency. In cytotoxic T cells, contributes to perforin-dependent cell lysis, but is unlikely to mediate direct cytotoxicity. Also has low phospholipase activity. In neurons, required for the localization of the phospholipid 1-oleoyl-2-palmitoyl-PC (OPPC) to neurite tips through acyl chain remodeling of membrane phospholipids. The resulting OPPC-rich lipid membrane domain recruits the t-SNARE protein STX4 by selectively interacting with the STX4 transmembrane domain and this promotes surface expression of the dopamine transporter SLC6A3/DAT at neurite tips by facilitating fusion of SLC6A3-containing transport vesicles with the plasma membrane. This chain is Pancreatic lipase-related protein 2, found in Rattus norvegicus (Rat).